A 763-amino-acid polypeptide reads, in one-letter code: Nibrin (763 aa).

Residues 22 to 81 (YVVGRKNCAILIPEDQSISRCHATLSVSHPSANLGQTNAASVLSIKDSSKYGTTVNGDKM) enclose the FHA domain. 2 consecutive BRCT domains span residues 102 to 179 (SKYR…CELL) and 215 to 324 (KRKS…NPRR). Disordered regions lie at residues 389–496 (VKET…SSQT), 535–593 (SKAA…SEIE), and 738–763 (QTQQ…KRRR). A compositionally biased stretch (basic and acidic residues) spans 423-433 (LFREDETDTRK). Positions 434-443 (NTPSLLPTKS) are enriched in polar residues. The short motif at 469 to 474 (AKKRDR) is the Nuclear localization signal element. The segment covering 473–482 (DRAEDEKEAS) has biased composition (basic and acidic residues). Residues 742–752 (VREESLAEDLF) show a composition bias toward basic and acidic residues. The FxF/Y motif signature appears at 748-757 (AEDLFRYNPK).

Belongs to the Nibrin family. Component of the MRN complex composed of two heterodimers rad50 and mre11 associated with a single nbn.

The protein localises to the nucleus. It localises to the chromosome. Its subcellular location is the PML body. It is found in the telomere. Its function is as follows. Component of the MRN complex, which plays a central role in double-strand break (DSB) repair, DNA recombination, maintenance of telomere integrity and meiosis. The MRN complex is involved in the repair of DNA double-strand breaks (DSBs) via homologous recombination (HR), an error-free mechanism which primarily occurs during S and G2 phases. The complex (1) mediates the end resection of damaged DNA, which generates proper single-stranded DNA, a key initial steps in HR, and is (2) required for the recruitment of other repair factors and efficient activation of ATM and ATR upon DNA damage. The MRN complex possesses single-strand endonuclease activity and double-strand-specific 3'-5' exonuclease activity, which are provided by MRE11, to initiate end resection, which is required for single-strand invasion and recombination. Within the MRN complex, nbn acts as a protein-protein adapter, which specifically recognizes and binds phosphorylated proteins, promoting their recruitment to DNA damage sites. Recruits mre11 and rad50 components of the MRN complex to DSBs in response to DNA damage. Promotes the recruitment of PI3/PI4-kinase family members atm, atr, and probably DNA-PKcs to the DNA damage sites, activating their functions. Mediates the recruitment of phosphorylated rbbp8/CtIP to DSBs, leading to cooperation between the MRN complex and rbbp8/CtIP to initiate end resection. The MRN complex promotes recruitment of topbp1 to DNA damage sites. The MRN complex and rbbp8/CtIP are also required for chromosome alignment during metaphase. The protein is Nibrin of Xenopus laevis (African clawed frog).